The chain runs to 88 residues: Large ribosomal subunit protein bL31B (88 aa).

This sequence belongs to the bacterial ribosomal protein bL31 family. Type B subfamily. In terms of assembly, part of the 50S ribosomal subunit.

The chain is Large ribosomal subunit protein bL31B from Leuconostoc citreum (strain KM20).